A 427-amino-acid chain; its full sequence is Alpha/beta hydrolase gkaG (427 aa).

The active site involves D368.

The protein belongs to the AB hydrolase superfamily. In terms of assembly, homodimer.

It participates in mycotoxin biosynthesis. In terms of biological role, alpha/beta hydrolase; part of the gene cluster that mediates the biosynthesis of GKK1032, fungal natural products containing a macrocyclic para-cyclophane connected to a decahydrofluorene ring system that show potent antitumor activities. Within the pathway, gkaG catalyzes the Knoevenagel condensation that affords the 3-pyrrolin-2-one ring, using as substrate the polyketide-tyrosyl acyl thioester product of gkaA. The pathway begins with the PKS-NRPS gkaA which, with the help of the trans-enoyl reductase gkaC, synthesizes the polyketide-tyrosyl acyl thioester product which can be reductively off-loaded by the terminal reductase (R) domain in gkaA. The alpha/beta hydrolase gkaG is then required to catalyze the subsequent Knoevenagel condensation that affords the 3-pyrrolin-2-one ring, whereas the three proteins gkaB, gkaX and gkaZ then function synergistically to form the cyclophane. The protein is Alpha/beta hydrolase gkaG of Penicillium citrinum.